The primary structure comprises 611 residues: Elongation factor 4 (611 aa).

The region spanning 11–193 (EKIRNFSIIA…QVVEYVPAPS (183 aa)) is the tr-type G domain. GTP contacts are provided by residues 23-28 (DHGKST) and 140-143 (NKID).

It belongs to the TRAFAC class translation factor GTPase superfamily. Classic translation factor GTPase family. LepA subfamily.

The protein localises to the cell membrane. The catalysed reaction is GTP + H2O = GDP + phosphate + H(+). Functionally, required for accurate and efficient protein synthesis under certain stress conditions. May act as a fidelity factor of the translation reaction, by catalyzing a one-codon backward translocation of tRNAs on improperly translocated ribosomes. Back-translocation proceeds from a post-translocation (POST) complex to a pre-translocation (PRE) complex, thus giving elongation factor G a second chance to translocate the tRNAs correctly. Binds to ribosomes in a GTP-dependent manner. The chain is Elongation factor 4 from Enterococcus faecalis (strain ATCC 700802 / V583).